Reading from the N-terminus, the 91-residue chain is Potassium channel toxin MeuTXK-beta-2 (91 aa).

Positions 1–19 (MQRNLVVLLFLGMVALSSC) are cleaved as a signal peptide. The region spanning 54–91 (QFGCSAYQGYCDDHCQDIEKKEGFCHGFKCKCGIPMGF) is the BetaSPN-type CS-alpha/beta domain. 3 disulfide bridges follow: cysteine 57-cysteine 78, cysteine 64-cysteine 83, and cysteine 68-cysteine 85.

This sequence belongs to the long chain scorpion toxin family. Class 1 subfamily. As to expression, expressed by the venom gland.

Its subcellular location is the secreted. Its function is as follows. Has a low affinity binding to potassium channels of rat brain synaptosomes. Displays weak antibacterial activity against Stenotrophomonas sp. Strongly inhibits the development of the Plasmodium berghei ookinetes. Displays slight hemolytic effect on mouse erythrocytes. Induces cytolysis on Xenopus oocytes at high concentrations. Is not toxic towards mice and towards the insect Tenebrio molitor. The protein is Potassium channel toxin MeuTXK-beta-2 of Mesobuthus eupeus (Lesser Asian scorpion).